Reading from the N-terminus, the 372-residue chain is Virion morphogenesis protein OPG132 (372 aa).

This sequence belongs to the orthopoxvirus OPG132 family.

It is found in the host cytoplasm. The protein localises to the virion. Functionally, lipid-bound viral membrane assembly protein that plays an essential role in immature virion (IV) to mature virion (MV) transition. Functions in both crescent-shaped viral membranes formation and its enclosure to form immature virions. In addition, participates in targeting mature virion proteins to sites of virion assembly to ensure their correct localization. This is Virion morphogenesis protein OPG132 (OPG132) from Homo sapiens (Human).